The primary structure comprises 197 residues: MKLIVGMTGATGAPLGVALLQALREMPNVETHLVMSKWAKTTIELETPYSARDVAALADFSHNPADQAAIISSGSFRTDGMIVIPCSMKTLAGIRAGYADGLVGRAADVVLKEGRKLVLVPREMPLSTIHLENMLALSRMGVAMVPPMPAFYNHPETVDDIVHHVVARVLDQFGLEHPHARRWQGLPQARNFSQENE.

Residues 9-11 (GAT), Ser-36, 87-90 (SMKT), and Arg-122 each bind FMN.

This sequence belongs to the UbiX/PAD1 family. YclB subfamily. As to quaternary structure, homododecamer.

It carries out the reaction dimethylallyl phosphate + FMNH2 = prenylated FMNH2 + phosphate. In terms of biological role, flavin prenyltransferase that catalyzes the synthesis of the prenylated FMN cofactor (prenyl-FMN) for phenolic acid decarboxylase C. Involved in the decarboxylation and detoxification of phenolic derivatives under both aerobic and anaerobic conditions. The polypeptide is Probable UbiX-like flavin prenyltransferase (ecdB) (Escherichia coli).